The chain runs to 122 residues: UPF0102 protein CKL_1410 (122 aa).

This sequence belongs to the UPF0102 family.

The chain is UPF0102 protein CKL_1410 from Clostridium kluyveri (strain ATCC 8527 / DSM 555 / NBRC 12016 / NCIMB 10680 / K1).